The chain runs to 257 residues: Transmembrane protein C257L (257 aa).

Transmembrane regions (helical) follow at residues 123–143 (LELL…FTAL) and 163–183 (MMIF…YVLV).

It belongs to the asfivirus C257R family.

It localises to the host membrane. The protein resides in the virion. The chain is Transmembrane protein C257L from African swine fever virus (isolate Warthog/Namibia/Wart80/1980) (ASFV).